The primary structure comprises 175 residues: ATP-dependent protease subunit HslV (175 aa).

Thr-2 is an active-site residue. 3 residues coordinate Na(+): Gly-158, Cys-161, and Thr-164.

Belongs to the peptidase T1B family. HslV subfamily. In terms of assembly, a double ring-shaped homohexamer of HslV is capped on each side by a ring-shaped HslU homohexamer. The assembly of the HslU/HslV complex is dependent on binding of ATP.

It is found in the cytoplasm. The enzyme catalyses ATP-dependent cleavage of peptide bonds with broad specificity.. Its activity is regulated as follows. Allosterically activated by HslU binding. Its function is as follows. Protease subunit of a proteasome-like degradation complex believed to be a general protein degrading machinery. This Haemophilus influenzae (strain PittGG) protein is ATP-dependent protease subunit HslV.